The primary structure comprises 430 residues: Bifunctional protein GlmU (430 aa).

A pyrophosphorylase region spans residues 1 to 223; sequence MSISVVILAA…EEEFKGVNSK (223 aa). Residues 8-11, Lys-22, and 81-82 contribute to the UDP-N-acetyl-alpha-D-glucosamine site; these read LAAG and GT. Residue Asp-102 participates in Mg(2+) binding. The UDP-N-acetyl-alpha-D-glucosamine site is built by Gly-135, Glu-149, Asn-164, and Asn-221. Asn-221 provides a ligand contact to Mg(2+). The linker stretch occupies residues 224–244; it reads LDLARAEEIMQRRIKEALMMA. The segment at 245 to 430 is N-acetyltransferase; the sequence is GVTMCLPETI…NFFYKFFGDK (186 aa). Residues Arg-308 and Lys-325 each coordinate UDP-N-acetyl-alpha-D-glucosamine. The active-site Proton acceptor is His-336. UDP-N-acetyl-alpha-D-glucosamine is bound by residues Tyr-339 and Asn-350. Acetyl-CoA contacts are provided by residues Ala-353, 359–360, Ser-378, Ala-396, and Arg-413; that span reads NY.

In the N-terminal section; belongs to the N-acetylglucosamine-1-phosphate uridyltransferase family. It in the C-terminal section; belongs to the transferase hexapeptide repeat family. In terms of assembly, homotrimer. It depends on Mg(2+) as a cofactor.

The protein localises to the cytoplasm. It catalyses the reaction alpha-D-glucosamine 1-phosphate + acetyl-CoA = N-acetyl-alpha-D-glucosamine 1-phosphate + CoA + H(+). The catalysed reaction is N-acetyl-alpha-D-glucosamine 1-phosphate + UTP + H(+) = UDP-N-acetyl-alpha-D-glucosamine + diphosphate. Its pathway is nucleotide-sugar biosynthesis; UDP-N-acetyl-alpha-D-glucosamine biosynthesis; N-acetyl-alpha-D-glucosamine 1-phosphate from alpha-D-glucosamine 6-phosphate (route II): step 2/2. The protein operates within nucleotide-sugar biosynthesis; UDP-N-acetyl-alpha-D-glucosamine biosynthesis; UDP-N-acetyl-alpha-D-glucosamine from N-acetyl-alpha-D-glucosamine 1-phosphate: step 1/1. It participates in bacterial outer membrane biogenesis; LPS lipid A biosynthesis. In terms of biological role, catalyzes the last two sequential reactions in the de novo biosynthetic pathway for UDP-N-acetylglucosamine (UDP-GlcNAc). The C-terminal domain catalyzes the transfer of acetyl group from acetyl coenzyme A to glucosamine-1-phosphate (GlcN-1-P) to produce N-acetylglucosamine-1-phosphate (GlcNAc-1-P), which is converted into UDP-GlcNAc by the transfer of uridine 5-monophosphate (from uridine 5-triphosphate), a reaction catalyzed by the N-terminal domain. This is Bifunctional protein GlmU from Sulfurovum sp. (strain NBC37-1).